Here is a 705-residue protein sequence, read N- to C-terminus: MSATPAVLRASACSACRFSALRLFVSSFATPRAPLPAARTRILSPAVTYSTFRPSPRLLASPAIEEHAEPAAQEQPNKIEDAQAEANKAEASTETSNEGGADVPWYLQVDAPTHPTLVHEPPPLPDIPEGSPKLMEPLVKFVSDELGMDNLDLLDLRAIDPPPALGPEVLMLFGTARSERHLHVSADRLVRWLRNRGISAKADGLLGRNELKTKLRRKARKAKLLGTTGLPSGADDGITTGWICVNLGTIGWSDMEMEFKDENGMTSGFGVPQSGTTIVVQLMTETRREELALEKLWSGILRRSLERQDKIDGKLPDATFTTAPDTVSRSTFLRPTPIRSSGRNRKRPDRLYFSTSARQHAKAVDVSQTDLATAMAGWEYSNASPSTIDNLLAQDTDSKVQLLFQMQDYLYSLPKDQALSAVSLCEDGSPSTFMRLFNRAIENLPSAQAWEARLWLEKAARALQHPDHGLARLGDLIQEMKLSGAADLSREKFVDFLRMIFAIPETTDAGVRQQASLSMDVIDMLFSRGEKVIEFDVVVAVIESLLRTGVRTPEARRLLTQFEDLLGEAQMDCPTEDEIIRLLDVYAHYRAWEKFWNVWRIFPRYCERRTERMYTKVYERIAAVDHQAMATDALRWCVEEMWHEQPPVRVTPAMLKALEACIRIADPEAESLAKDIDDRISDAQYMDREFVRLWLTLHGSAAWGA.

The N-terminal 31 residues, 1–31, are a transit peptide targeting the mitochondrion; it reads MSATPAVLRASACSACRFSALRLFVSSFATP. Disordered regions lie at residues 83 to 102 and 330 to 349; these read QAEA…GGAD and STFL…KRPD. The span at 330–341 shows a compositional bias: polar residues; the sequence is STFLRPTPIRSS.

Belongs to the ATP25 family.

The protein localises to the mitochondrion inner membrane. In terms of biological role, probable mitochondrial mRNA stabilization factor. This Sordaria macrospora (strain ATCC MYA-333 / DSM 997 / K(L3346) / K-hell) protein is ATPase synthesis protein 25, mitochondrial (ATP25).